The primary structure comprises 511 residues: Signal transduction histidine-protein kinase/phosphatase MprB (511 aa).

Over 1 to 26 the chain is Cytoplasmic; it reads MVGFRRGPRAPLRATSSLSLRWRVML. A helical membrane pass occupies residues 27–47; it reads LAMSMVAMVVVLMSFAVYAVI. Residues 48–163 lie on the Extracellular side of the membrane; it reads SAALYSDIDN…PTEAVMTKLR (116 aa). A helical transmembrane segment spans residues 164-184; sequence AVLLIVGGVGVAVAAVAGGMV. At 185–511 the chain is on the cytoplasmic side; the sequence is TRAGLRPVGR…SVDSQSARAR (327 aa). An HAMP domain is found at 186 to 238; it reads RAGLRPVGRLTEAAERVARTDDLRPIPVFGSDELARLTEAFNLMLRALAESRE. Residues 246 to 466 form the Histidine kinase domain; the sequence is DAGHELRTPL…AICMLLPGRP (221 aa). His249 is modified (phosphohistidine; by autocatalysis). The interval 468-511 is disordered; it reads PDSAYPAAPDDKKTEPVDTRGANGANSRGSANVISVDSQSARAR. A compositionally biased stretch (basic and acidic residues) spans 476-485; it reads PDDKKTEPVD. Over residues 491–511 the composition is skewed to polar residues; that stretch reads GANSRGSANVISVDSQSARAR.

Mg(2+) serves as cofactor. Requires Mn(2+) as cofactor. Post-translationally, autophosphorylated.

The protein localises to the cell membrane. The catalysed reaction is ATP + protein L-histidine = ADP + protein N-phospho-L-histidine.. In terms of biological role, member of the two-component regulatory system MprB/MprA which contributes to maintaining a balance among several systems involved in stress resistance and is required for establishment and maintenance of persistent infection in the host. In response to environmental signals MprB acts both as a membrane-associated protein kinase that undergoes autophosphorylation and subsequently transfers the phosphate to MprA, and a protein phosphatase that dephosphorylates phospho-MprA. This Mycobacterium ulcerans (strain Agy99) protein is Signal transduction histidine-protein kinase/phosphatase MprB (mprB).